A 320-amino-acid polypeptide reads, in one-letter code: tRNA dimethylallyltransferase (320 aa).

Position 17-24 (17-24) interacts with ATP; sequence GPTASGKT. Residue 19 to 24 participates in substrate binding; the sequence is TASGKT. 3 interaction with substrate tRNA regions span residues 42–45, 166–170, and 249–254; these read DSAL, QRIQR, and RCVGYR.

This sequence belongs to the IPP transferase family. Monomer. The cofactor is Mg(2+).

It carries out the reaction adenosine(37) in tRNA + dimethylallyl diphosphate = N(6)-dimethylallyladenosine(37) in tRNA + diphosphate. Its function is as follows. Catalyzes the transfer of a dimethylallyl group onto the adenine at position 37 in tRNAs that read codons beginning with uridine, leading to the formation of N6-(dimethylallyl)adenosine (i(6)A). In Herminiimonas arsenicoxydans, this protein is tRNA dimethylallyltransferase.